The primary structure comprises 540 residues: MLSQIQRFGGAMFTPVLLFPFAGIVVGIAIMLRNPMFVGEALTAPDSLFAQIVHIIEEGGWTVFRNMPLIFAVGLPIGLAKQAQGRACLAVLVSFLTWNYFINAMGMTWGHFFGVDFSAEPTAGSGLTMIAGIKTLDTSIIGAIVISGLVTALHNRYFDKPLPVFLGIFQGSSFVVIVAFLAMIPCAWLTLLGWPKVQLGIESLQAFLRSAGALGVWVYIFLERILIPTGLHHFVYGPFIFGPAVVEGGLQVYWAEHLQAFSQSTEPLKTLFPEGGFALHGNSKVFGSVGIALALYFTAAPENRVKVAGLLIPATLTAMLVGITEPLEFTFLFISPLLFAVHAVLAATMATVMYICGVVGNFGGGLLDQFLPQNWIPMFHHHASMMFIQIGIGLCFTALYFVVFRTLILRLNLKTPGREESEIKLYSKADYQAARGKTTAAAAPETRLGQAAGFLQALGGADNIESINNCATRLRIALVDMAKTQSDDVFKALGAHGVVRRGNGIQVIVGLHVPQVRDQLENLMKDSLSTEHTTMTEAVS.

The region spanning 1–420 (MLSQIQRFGG…LNLKTPGREE (420 aa)) is the PTS EIIC type-1 domain. 11 helical membrane passes run 12 to 32 (MFTPVLLFPFAGIVVGIAIML), 87 to 107 (ACLAVLVSFLTWNYFINAMGM), 130 to 150 (IAGIKTLDTSIIGAIVISGLV), 174 to 194 (FVVIVAFLAMIPCAWLTLLGW), 201 to 221 (IESLQAFLRSAGALGVWVYIF), 225 to 245 (ILIPTGLHHFVYGPFIFGPAV), 277 to 297 (FALHGNSKVFGSVGIALALYF), 307 to 327 (VAGLLIPATLTAMLVGITEPL), 329 to 349 (FTFLFISPLLFAVHAVLAATM), 352 to 372 (VMYICGVVGNFGGGLLDQFLP), and 384 to 404 (SMMFIQIGIGLCFTALYFVVF). In terms of domain architecture, PTS EIIB type-1 spans 448–530 (LGQAAGFLQA…ENLMKDSLST (83 aa)). Cys-470 serves as the catalytic Phosphocysteine intermediate; for EIIB activity.

Its subcellular location is the cell membrane. The phosphoenolpyruvate-dependent sugar phosphotransferase system (sugar PTS), a major carbohydrate active -transport system, catalyzes the phosphorylation of incoming sugar substrates concomitantly with their translocation across the cell membrane. This system is involved in alpha-glucoside transport. Functionally, involved in the transport and simultaneous phosphorylation at O-6 of the glucosyl moiety of sucrose and its five linkage-isomeric alpha-D-glucosyl-D-fructoses. Can also transport maltose, isomaltose and maltitol, phosphorylating at O-6 of their non-reducing glucose portion. This is PTS system alpha-glucoside-specific EIICB component (aglA) from Klebsiella pneumoniae.